Consider the following 319-residue polypeptide: Olfactory receptor 5B21 (319 aa).

Topologically, residues 1-26 (MTSMENITEVTEFILLGLTDDPNLQV) are extracellular. A glycan (N-linked (GlcNAc...) asparagine) is linked at N6. The chain crosses the membrane as a helical span at residues 27–47 (PLLLIFLFIYLVTLIGNGGMM). Over 48 to 55 (VIIFSDSH) the chain is Cytoplasmic. A helical membrane pass occupies residues 56–76 (LHTPMYFFLSNLSFVDLGYSS). Residues 77-100 (AVAPKMVAALQSGNKVISYNGCAA) lie on the Extracellular side of the membrane. C98 and C190 are joined by a disulfide. Residues 101–121 (QFFFFVGFATVECYLLASMAY) form a helical membrane-spanning segment. Over 122–134 (DRHAAVCRPLHYT) the chain is Cytoplasmic. The helical transmembrane segment at 135 to 155 (TTMTTGVCTILTIGSYTCGFL) threads the bilayer. Residues 156 to 197 (NASIHAADTFKLSFCGSNKINHFFCDIPPLLALACSSTHISK) are Extracellular-facing. A helical membrane pass occupies residues 198–218 (LVVFFVVGFNVFFTLLVIIIS). The Cytoplasmic portion of the chain corresponds to 219 to 238 (YFFIYIAIQNMKSSEGRKKA). The helical transmembrane segment at 239–259 (FSTCASHLTAVSIFYGTIIFM) threads the bilayer. The Extracellular segment spans residues 260–272 (YLQPSSGQSMDTD). A helical transmembrane segment spans residues 273–293 (KIASVFYTVVIPMLNPLIYSL). Residues 294-319 (RNREVKSALWKILNRFYPASFSVSRK) lie on the Cytoplasmic side of the membrane.

Belongs to the G-protein coupled receptor 1 family.

Its subcellular location is the cell membrane. In terms of biological role, odorant receptor. This is Olfactory receptor 5B21 from Mus musculus (Mouse).